A 399-amino-acid polypeptide reads, in one-letter code: Methylthioribose kinase (399 aa).

ATP is bound by residues asparagine 40, lysine 57, and 111 to 113 (EDL). Substrate is bound at residue aspartate 229. Residue 246 to 248 (DAE) participates in ATP binding. Arginine 344 is a binding site for substrate.

The protein belongs to the methylthioribose kinase family. As to quaternary structure, homodimer.

The enzyme catalyses 5-(methylsulfanyl)-D-ribose + ATP = 5-(methylsulfanyl)-alpha-D-ribose 1-phosphate + ADP + H(+). It participates in amino-acid biosynthesis; L-methionine biosynthesis via salvage pathway; S-methyl-5-thio-alpha-D-ribose 1-phosphate from S-methyl-5'-thioadenosine (hydrolase route): step 2/2. In terms of biological role, catalyzes the phosphorylation of methylthioribose into methylthioribose-1-phosphate. This chain is Methylthioribose kinase, found in Erwinia tasmaniensis (strain DSM 17950 / CFBP 7177 / CIP 109463 / NCPPB 4357 / Et1/99).